Reading from the N-terminus, the 128-residue chain is Cionin (128 aa).

An N-terminal signal peptide occupies residues 1–22; it reads MGSNIVIYFSIIVIVTLNVNGV. Residues 23–108 constitute a propeptide that is removed on maturation; that stretch reads PASDLFKSVS…NQGHMQRMDR (86 aa). Tyr110 and Tyr111 each carry sulfotyrosine. Phe116 bears the Phenylalanine amide mark. The propeptide occupies 120–128; it reads AIEDVDYEY.

The protein belongs to the gastrin/cholecystokinin family. Expressed in both the gut and the neural ganglion.

The protein localises to the secreted. This chain is Cionin, found in Ciona intestinalis (Transparent sea squirt).